Reading from the N-terminus, the 567-residue chain is DNA ligase B (567 aa).

Lys-132 acts as the N6-AMP-lysine intermediate in catalysis.

Belongs to the NAD-dependent DNA ligase family. LigB subfamily.

It carries out the reaction NAD(+) + (deoxyribonucleotide)n-3'-hydroxyl + 5'-phospho-(deoxyribonucleotide)m = (deoxyribonucleotide)n+m + AMP + beta-nicotinamide D-nucleotide.. Functionally, catalyzes the formation of phosphodiester linkages between 5'-phosphoryl and 3'-hydroxyl groups in double-stranded DNA using NAD as a coenzyme and as the energy source for the reaction. This chain is DNA ligase B, found in Yersinia pestis bv. Antiqua (strain Angola).